Reading from the N-terminus, the 156-residue chain is Xanthocillin biosynthesis cluster protein D (156 aa).

Asn107 and Asn120 each carry an N-linked (GlcNAc...) asparagine glycan. Residues 131-153 (IHLNAIALVATVWYGFTLSSSLL) traverse the membrane as a helical segment.

It localises to the membrane. Its pathway is secondary metabolite biosynthesis. Its function is as follows. Part of the gene cluster that mediates the biosynthesis of the isocyanide xanthocillin and its derivatives. The first step of the pathway consists in the conversion of tyrosine into a vinyl-isonitrile intermediate by the isocyanide synthase xanB. Subsequent oxidative dimerization of this intermediate to form xanthocillin may involve the cytochrome P450 monooxygenase xanG, whose expression is coregulated with that of XanB. Xanthocillin can be further modified by the isonitrile hydratase-like protein xanA which introduces N-formyl groups and the methyltransferase xanE which introduces methyl groups, leading to the production of several derivatives including fumiformamide. Finally, fumiformamide can be subject to both oxidative and reductive cyclization to yield melanocins E and F, respectively. The protein is Xanthocillin biosynthesis cluster protein D of Aspergillus fumigatus (strain ATCC MYA-4609 / CBS 101355 / FGSC A1100 / Af293) (Neosartorya fumigata).